Reading from the N-terminus, the 481-residue chain is tRNA:m(4)X modification enzyme TRM13 homolog (481 aa).

A CHHC U11-48K-type zinc finger spans residues 56 to 83; the sequence is RILCPLDPKHTVYEDQLAKHLKKCNSRE. Residues C59, H65, H75, and C79 each coordinate Zn(2+). Residues 113-140 are a coiled coil; that stretch reads SLSEEQLENLIKKLRKASEGLNSTHEDH. Disordered stretches follow at residues 296-319 and 379-414; these read AKRI…SEKD and LEGS…TDSL. Residues 385–407 show a composition bias toward basic and acidic residues; that stretch reads TPERKDAQRDENEEHDDGGDRLT.

This sequence belongs to the methyltransferase TRM13 family.

The catalysed reaction is cytidine(4) in tRNA(Pro) + S-adenosyl-L-methionine = 2'-O-methylcytidine(4) in tRNA(Pro) + S-adenosyl-L-homocysteine + H(+). It carries out the reaction cytidine(4) in tRNA(Gly)(GCC) + S-adenosyl-L-methionine = 2'-O-methylcytidine(4) in tRNA(Gly)(GCC) + S-adenosyl-L-homocysteine + H(+). It catalyses the reaction adenosine(4) in tRNA(His) + S-adenosyl-L-methionine = 2'-O-methyladenosine(4) in tRNA(His) + S-adenosyl-L-homocysteine + H(+). Functionally, tRNA methylase which 2'-O-methylates cytidine(4) in tRNA(Pro) and tRNA(Gly)(GCC), and adenosine(4) in tRNA(His). The protein is tRNA:m(4)X modification enzyme TRM13 homolog (Trmt13) of Mus musculus (Mouse).